The following is a 308-amino-acid chain: D-alanine--D-alanine ligase (308 aa).

The 196-residue stretch at 108–303 (KLVWKAAGLP…YEALCLKVLE (196 aa)) folds into the ATP-grasp domain. 134 to 189 (EAELGLPMFVKPACEGSSLGVTKVRKAGELAQAYAEARKFDPLVLAEQFVGGGEYT) contributes to the ATP binding site. Mg(2+) contacts are provided by aspartate 257, glutamate 270, and asparagine 272.

The protein belongs to the D-alanine--D-alanine ligase family. Mg(2+) is required as a cofactor. It depends on Mn(2+) as a cofactor.

Its subcellular location is the cytoplasm. The enzyme catalyses 2 D-alanine + ATP = D-alanyl-D-alanine + ADP + phosphate + H(+). It functions in the pathway cell wall biogenesis; peptidoglycan biosynthesis. Its function is as follows. Cell wall formation. The polypeptide is D-alanine--D-alanine ligase (Laribacter hongkongensis (strain HLHK9)).